A 216-amino-acid chain; its full sequence is Redox-sensing transcriptional repressor Rex 1 (216 aa).

The H-T-H motif DNA-binding region spans 16–55; sequence LYYRYLRMLHDTGKNKVSSTELSEAVQVDSATIRRDFSYF. 90 to 95 provides a ligand contact to NAD(+); that stretch reads GVGNLG.

This sequence belongs to the transcriptional regulatory Rex family. Homodimer.

The protein localises to the cytoplasm. Functionally, modulates transcription in response to changes in cellular NADH/NAD(+) redox state. This is Redox-sensing transcriptional repressor Rex 1 from Enterococcus faecalis (strain ATCC 700802 / V583).